The primary structure comprises 659 residues: Cysteine-rich receptor-like protein kinase 7 (659 aa).

Positions 1–23 (MSSLFPFIFLFLFSFLTSFRASA) are cleaved as a signal peptide. At 24 to 273 (QDPRFLAYYC…SLSDKSGNSN (250 aa)) the chain is on the extracellular side. Gnk2-homologous domains are found at residues 27–131 (RFLA…HKNI) and 142–244 (FILR…LYDF). N-linked (GlcNAc...) asparagine glycans are attached at residues Asn-35, Asn-42, Asn-60, Asn-69, and Asn-103. Residue Asn-246 is glycosylated (N-linked (GlcNAc...) asparagine). Residues 274–294 (VVVVAVVVPIIVAVLIFIAGY) form a helical membrane-spanning segment. Residues 295–659 (CFFAKRAKKT…DKSMSDLDPR (365 aa)) lie on the Cytoplasmic side of the membrane. Residues 336–622 (FSENNKIGRG…ALPAPQQPGF (287 aa)) form the Protein kinase domain. ATP is bound by residues 342–350 (IGRGGFGDV) and Lys-364. Tyr-409 is subject to Phosphotyrosine. The Proton acceptor role is filled by Asp-461. Ser-465 is modified (phosphoserine). Thr-501 is subject to Phosphothreonine. At Tyr-509 the chain carries Phosphotyrosine. Residues 626–659 (SRPGTNRLDSDQSTTNKSVTVSIDDKSMSDLDPR) form a disordered region. Residues 636-646 (DQSTTNKSVTV) are compositionally biased toward polar residues. Residues 648 to 659 (IDDKSMSDLDPR) show a composition bias toward basic and acidic residues.

The protein belongs to the protein kinase superfamily. Ser/Thr protein kinase family. CRK subfamily.

The protein resides in the membrane. It carries out the reaction L-seryl-[protein] + ATP = O-phospho-L-seryl-[protein] + ADP + H(+). It catalyses the reaction L-threonyl-[protein] + ATP = O-phospho-L-threonyl-[protein] + ADP + H(+). The polypeptide is Cysteine-rich receptor-like protein kinase 7 (CRK7) (Arabidopsis thaliana (Mouse-ear cress)).